A 402-amino-acid polypeptide reads, in one-letter code: Sorting nexin 1 (402 aa).

Polar residues predominate over residues 1-10 (MESTEQPRNI). The disordered stretch occupies residues 1-25 (MESTEQPRNISGSMQSPRSPSSHPY). Residues 11-24 (SGSMQSPRSPSSHP) are compositionally biased toward low complexity. Phosphoserine is present on Ser16. One can recognise a PX domain in the interval 24 to 143 (PYLSVSVTDP…TFLQADEETM (120 aa)). 3 residues coordinate a 1,2-diacyl-sn-glycero-3-phospho-(1D-myo-inositol-3-phosphate): Arg67, Lys93, and Arg109. The 243-residue stretch at 160–402 (LMQMFRDVQS…LPKLEASYSV (243 aa)) folds into the BAR domain.

It belongs to the sorting nexin family. As to quaternary structure, homodimer. Heterodimer with SNX2A or SNX2B. Component of the retromer complex which consists of VPS29 (MAG1), VPS26 (VPS26A or VPS26B), VPS35 (VPS35A or VPS35B or VPS35C), VPS5/17 (SNX1 or SNX2A or SNX2B). Interacts with BLOS1 and BLOS2. As to expression, ubiquitously expressed.

The protein resides in the cytoplasm. It localises to the endosome membrane. The protein localises to the prevacuolar compartment membrane. Its subcellular location is the golgi apparatus. It is found in the trans-Golgi network membrane. Its function is as follows. Plays a role in vesicular protein sorting. Acts at the crossroads between the secretory and endocytic pathways. Is involved in the endosome to vacuole protein transport via its interaction with the BLOS1/2 proteins and, as component of the membrane-associated retromer complex, is also involved in endosome-to-Golgi retrograde transport. Required for the auxin-carrier protein PIN2 sorting to the lytic vacuolar pathway and the trafficking of several plasma membrane proteins. Also involved in the efficient sorting of seed storage protein globulin 12S. The chain is Sorting nexin 1 (SNX1) from Arabidopsis thaliana (Mouse-ear cress).